Reading from the N-terminus, the 4684-residue chain is Plectin (4684 aa).

The segment at 1–1470 is globular 1; that stretch reads MVAGMLMPRD…SELTTLTSQY (1470 aa). Residues Phe-20 and Arg-21 each carry the phosphoserine modification. Val-26 bears the Phosphotyrosine mark. At Gly-42 the chain carries Phosphoserine. Thr-113 is subject to Phosphothreonine. Phosphoserine is present on residues Ser-125 and Ser-149. The segment at 144 to 179 is disordered; sequence ELEEVSPETPVVPATTQRTLARPGPEPAPATDERDR. Residues 175–400 are actin-binding; that stretch reads DERDRVQKKT…YVSSLYDAMP (226 aa). 2 Calponin-homology (CH) domains span residues 179–282 and 295–400; these read RVQK…LHFQ and MTAK…DAMP. The stretch at 645-710 is one Spectrin 1 repeat; sequence LQSVQRRPEL…SIEEFRAKIE (66 aa). At Ser-720 the chain carries Phosphoserine. 2 Spectrin repeats span residues 740 to 824 and 837 to 930; these read KLLN…REDH and LQTQ…AVVQ. One can recognise an SH3 domain in the interval 941-998; sequence RGRLPLLAVCDYKQVEVTVHKGDECQLVGPAQPSHWKVLSSSGSEAAVPSVCFLVPPP. A required for interaction with intermediate filament proteins region spans residues 964-4574; the sequence is ECQLVGPAQP…VGAYSKYLTC (3611 aa). Ser-1047 carries the post-translational modification Phosphoserine. A Spectrin 4 repeat occupies 1315-1415; that stretch reads RERVAQLLER…QRFAKQYINA (101 aa). Ser-1435 carries the post-translational modification Phosphoserine. Residues 1469–2756 are a coiled coil; it reads QYIKFISETL…AHSEEVTASQ (1288 aa). Positions 1471 to 2755 are central fibrous rod domain; it reads IKFISETLRR…LAHSEEVTAS (1285 aa). Positions 1618-1650 are disordered; the sequence is RAEEAEAQKRQAQEEAERLRRQVQDESQRKRQA. Position 1721 is a phosphoserine (Ser-1721). Lys-1725 is modified (N6-acetyllysine). Ser-1732 bears the Phosphoserine mark. 3 disordered regions span residues 1794–1836, 2105–2139, and 2217–2307; these read LAQA…KQRQ, EAARQRQLAAEEERRRREAEERVQKSLAAEEEAAR, and RGEA…MEKH. Basic and acidic residues-rich tracts occupy residues 1798–1836, 2105–2128, and 2217–2258; these read EAEKQKEEAEREARRRGKAEEQAVRQRELAEQELEKQRQ, EAARQRQLAAEEERRRREAEERVQ, and RGEA…KQSA. The segment covering 2259–2272 has biased composition (low complexity); sequence EEQAQARAQAQAAA. Basic and acidic residues predominate over residues 2273–2288; the sequence is EKLRKEAEQEAARRAQ. A Phosphoserine modification is found at Ser-2631. Residue Lys-2636 is modified to N6-acetyllysine. Disordered stretches follow at residues 2668–2707 and 2763–2784; these read REEQQRQQQQMEQERQRLVASMEEARRRQHEAEEGVRRKQ and LPNGRDALDGPAAEAEPEHSFD. The span at 2679–2707 shows a compositional bias: basic and acidic residues; sequence EQERQRLVASMEEARRRQHEAEEGVRRKQ. A globular 2 region spans residues 2756-4684; the sequence is QVAATKTLPN…SLGGPESAVA (1929 aa). Phosphoserine occurs at positions 2782 and 2802. Plectin repeat units follow at residues 2826–2863, 2864–2901, 2902–2939, 2940–2977, and 2981–3015; these read RHYLQGRSSIAGLLLKATNEKLSVYAALQRQLLSPGTA, LILLEAQAASGFLLDPVRNRRLTVNEAVKEGVVGPELH, HKLLSAERAVTGYKDPYTGQQISLFQAMQKGLIVREHG, IRLLEAQIATGGVIDPVHSHRVPVDVAYRRGYFDEEMN, and ADPSDDTKGFFDPNTHENLTYLQLLERCVEDPETG. Thr-2886 carries the post-translational modification Phosphothreonine. Tyr-3033 carries the post-translational modification Phosphotyrosine. Residue Ser-3036 is modified to Phosphoserine. An N6-acetyllysine mark is found at Lys-3053 and Lys-3091. Plectin repeat units follow at residues 3116 to 3153, 3154 to 3191, 3192 to 3229, 3230 to 3267, 3268 to 3305, and 3306 to 3343; these read SLVPAAELLESRVIDRELYQQLQRGERSVRDVAEVDTV, RRALRGANVIAGVWLEEAGQKLSIYNALKKDLLPSDMA, VALLEAQAGTGHIIDPATSARLTVDEAVRAGLVGPEFH, EKLLSAEKAVTGYRDPYTGQSVSLFQALKKGLIPREQG, LRLLDAQLSTGGIVDPSKSHRVPLDVACARGCLDEETS, and RALSAPRADAKAYSDPSTGEPATYGELQQRCRPDQLTG. Residues 3310-3331 form a disordered region; the sequence is APRADAKAYSDPSTGEPATYGE. Tyr-3362 carries the post-translational modification Phosphotyrosine. Lys-3420 carries the N6-acetyllysine modification. 5 Plectin repeats span residues 3485 to 3522, 3523 to 3560, 3561 to 3598, 3599 to 3636, and 3640 to 3674; these read RTLLQGSGCLAGIYLEDTKEKVSIYEAMRRGLLRATTA, ALLLEAQAATGFLVDPVRNQRLYVHEAVKAGVVGPELH, EQLLSAEKAVTGYRDPYSGSTISLFQAMQKGLVLRQHG, IRLLEAQIATGGIIDPVHSHRVPVDVAYQRGYFSEEMN, and ADPSDDTKGFFDPNTHENLTYRQLLERCVEDPETG. Phosphoserine is present on Ser-3580. The residue at position 3785 (Thr-3785) is a Phosphothreonine. Plectin repeat units lie at residues 3820–3857, 3858–3895, 3896–3933, 3934–3971, and 3975–4008; these read WCYLYGTGSVAGVYLPGSRQTLSIYQALKKGLLSAEVA, RLLLEAQAATGFLLDPVKGERLTVDEAVRKGLVGPELH, DRLLSAERAVTGYRDPYTEQTISLFQAMKKELIPTEEA, LRLLDAQLATGGIVDPRLGFHLPLEVAYQRGYLNKDTH, and SEPSEVRSYVDPSTDERLSYTQLLRRCRRDDGTG. Residues 3956-4293 form a required for interaction with type2 keratins, DES and VIM region; sequence PLEVAYQRGY…ETGKEMSVYE (338 aa). Thr-4030 carries the phosphothreonine modification. Position 4054 is a phosphoserine (Ser-4054). Plectin repeat units lie at residues 4063–4100, 4101–4138, 4139–4176, 4177–4214, 4218–4252, 4265–4305, and 4319–4356; these read QKFLEGTSCIAGVFVDATKERLSVYQAMKKGIIRPGTA, FELLEAQAATGYVIDPIKGLKLTVEEAVRMGIVGPEFK, DKLLSAERAVTGYKDPYSGKLISLFQAMKKGLILKDHG, IRLLEAQIATGGIIDPEESHRLPVEVAYKRGLFDEEMN, TDPSDDTKGFFDPNTEENLTYLQLMERCITDPQTG, RKTS…HQTY, and TISSSDGVVKSMIIDRRSGRQYDIDDAIAKNLIDRSAL. The segment at 4250 to 4300 is binding to intermediate filaments; sequence QTGLCLLPLKEKKRERKTSSKSSVRKRRVVIVDPETGKEMSVYEAYRKGLI. Phosphoserine is present on residues Ser-4382, Ser-4384, Ser-4385, Ser-4386, Ser-4389, Ser-4390, Ser-4391, and Ser-4392. At Tyr-4393 the chain carries Phosphotyrosine. Phosphoserine is present on residues Ser-4396, Ser-4400, and Ser-4406. 5 Plectin repeats span residues 4408–4445, 4446–4483, 4484–4521, 4522–4559, and 4560–4597; these read SDPTEETGPVAGILDTETLEKVSITEAMHRNLVDNITG, QRLLEAQACTGGIIDPSTGERFPVTDAVNKGLVDKIMV, DRINLAQKAFCGFEDPRTKTKMSAAQALKKGWLYYEAG, QRFLEVQYLTGGLIEPDTPGRVPLDEALQRGTVDARTA, and QKLRDVGAYSKYLTCPKTKLKISYKDALDRSMVEEGTG. Residue Thr-4411 is modified to Phosphothreonine. A required for efficient interaction with KRT5 and KRT14 heterodimers region spans residues 4505 to 4574; that stretch reads MSAAQALKKG…VGAYSKYLTC (70 aa). Phosphothreonine; by CDK1 is present on Thr-4539. Phosphoserine is present on residues Ser-4607 and Ser-4613. A compositionally biased stretch (low complexity) spans 4611–4678; sequence YYSPYSVSGS…ASGSSASLGG (68 aa). Residues 4611 to 4684 form a disordered region; that stretch reads YYSPYSVSGS…SLGGPESAVA (74 aa). Tyr-4615 carries the phosphotyrosine modification. 3 positions are modified to phosphoserine: Ser-4616, Ser-4618, and Ser-4622. The residue at position 4623 (Thr-4623) is a Phosphothreonine. The tract at residues 4625–4640 is 4 X 4 AA tandem repeats of G-S-R-X; the sequence is GSRTGSRTGSRAGSRR. The residue at position 4626 (Ser-4626) is a Phosphoserine. An omega-N-methylarginine mark is found at Arg-4627 and Arg-4640. Ser-4642, Ser-4672, and Ser-4675 each carry phosphoserine.

The protein belongs to the plakin or cytolinker family. Homodimer or homotetramer. Interacts (via actin-binding domain) with SYNE3. Interacts (via calponin-homology (CH) 1 domain) with VIM (via rod region). Interacts (via N-terminus) with DST isoform 2 (via N-terminus). Interacts with FER. Interacts with TOR1A. Interacts with ANK3. Identified in complexes that contain VIM, EZR, AHNAK, BFSP1, BFSP2, ANK2, PLEC, PRX and spectrin. Interacts with COL17A1. As to quaternary structure, interacts with KRT14, heterodimers consisting of KRT8 and KRT18, heterodimers consisting of KRT5 and KRT14, heterodimers consisting of KRT14 and KRT15, and heterodimers consisting of KRT1 and KRT10. Interacts with DES and VIM. In terms of processing, phosphorylated by CDK1; regulates dissociation from intermediate filaments during mitosis. As to expression, widely expressed with highest levels in muscle, heart, placenta and spinal cord.

It is found in the cytoplasm. The protein resides in the cytoskeleton. It localises to the cell junction. Its subcellular location is the hemidesmosome. The protein localises to the cell projection. It is found in the podosome. Interlinks intermediate filaments with microtubules and microfilaments and anchors intermediate filaments to desmosomes or hemidesmosomes. Could also bind muscle proteins such as actin to membrane complexes in muscle. May be involved not only in the filaments network, but also in the regulation of their dynamics. Structural component of muscle. Isoform 9 plays a major role in the maintenance of myofiber integrity. The chain is Plectin (PLEC) from Homo sapiens (Human).